The chain runs to 256 residues: Ribonuclease HII (256 aa).

Positions 73 to 256 (KLIAGIDEAG…RVSFTKNFIV (184 aa)) constitute an RNase H type-2 domain. Residues aspartate 79, glutamate 80, and aspartate 171 each coordinate a divalent metal cation.

The protein belongs to the RNase HII family. It depends on Mn(2+) as a cofactor. Mg(2+) serves as cofactor.

The protein localises to the cytoplasm. The catalysed reaction is Endonucleolytic cleavage to 5'-phosphomonoester.. Endonuclease that specifically degrades the RNA of RNA-DNA hybrids. The chain is Ribonuclease HII from Acetivibrio thermocellus (strain ATCC 27405 / DSM 1237 / JCM 9322 / NBRC 103400 / NCIMB 10682 / NRRL B-4536 / VPI 7372) (Clostridium thermocellum).